A 397-amino-acid chain; its full sequence is Zinc finger transcription factor family protein 30 (397 aa).

A disordered region spans residues 1–40 (MKLEDDKIHSPTNTEEEGYGSDVEVENGTDISGSKGGSGV). A compositionally biased stretch (acidic residues) spans 14-27 (TEEEGYGSDVEVEN). 3 consecutive C2H2-type zinc fingers follow at residues 51–74 (FRCS…MQAH), 78–102 (YKCT…KQHH), and 107–125 (YMCR…LHIH).

It is found in the nucleus. The chain is Zinc finger transcription factor family protein 30 (ztf-30) from Caenorhabditis elegans.